The chain runs to 769 residues: Probable beta-glucosidase M (769 aa).

The N-terminal stretch at 1–22 (MHSNVGLAGLAGLLATASVCLS) is a signal peptide. 3 N-linked (GlcNAc...) asparagine glycosylation sites follow: asparagine 28, asparagine 75, and asparagine 262. Aspartate 290 is a catalytic residue. N-linked (GlcNAc...) asparagine glycosylation is found at asparagine 318, asparagine 325, asparagine 396, asparagine 437, asparagine 510, asparagine 546, and asparagine 625.

It belongs to the glycosyl hydrolase 3 family.

It is found in the secreted. It catalyses the reaction Hydrolysis of terminal, non-reducing beta-D-glucosyl residues with release of beta-D-glucose.. It functions in the pathway glycan metabolism; cellulose degradation. In terms of biological role, beta-glucosidases are one of a number of cellulolytic enzymes involved in the degradation of cellulosic biomass. Catalyzes the last step releasing glucose from the inhibitory cellobiose. The sequence is that of Probable beta-glucosidase M (bglM) from Aspergillus fumigatus (strain CBS 144.89 / FGSC A1163 / CEA10) (Neosartorya fumigata).